We begin with the raw amino-acid sequence, 422 residues long: UPF0229 protein SO_2883 (422 aa).

The segment at 60–111 (SEPMFHQGKGGVRDRVHPGNDQFTRGDKIDRPQGGSGGGAGKGDASDSGEGN) is disordered. Basic and acidic residues predominate over residues 70–90 (GVRDRVHPGNDQFTRGDKIDR).

Belongs to the UPF0229 family.

This chain is UPF0229 protein SO_2883, found in Shewanella oneidensis (strain ATCC 700550 / JCM 31522 / CIP 106686 / LMG 19005 / NCIMB 14063 / MR-1).